We begin with the raw amino-acid sequence, 235 residues long: Carboxy-S-adenosyl-L-methionine synthase (235 aa).

Residues tyrosine 35, glycine 60–serine 62, aspartate 83–asparagine 84, asparagine 124, and arginine 191 contribute to the S-adenosyl-L-methionine site.

The protein belongs to the class I-like SAM-binding methyltransferase superfamily. Cx-SAM synthase family. As to quaternary structure, homodimer.

It catalyses the reaction prephenate + S-adenosyl-L-methionine = carboxy-S-adenosyl-L-methionine + 3-phenylpyruvate + H2O. Functionally, catalyzes the conversion of S-adenosyl-L-methionine (SAM) to carboxy-S-adenosyl-L-methionine (Cx-SAM). This is Carboxy-S-adenosyl-L-methionine synthase from Campylobacter jejuni subsp. doylei (strain ATCC BAA-1458 / RM4099 / 269.97).